Consider the following 197-residue polypeptide: Adenylate kinase (197 aa).

16 to 21 (GAGKGT) is an ATP binding site. The NMP stretch occupies residues 36 to 65 (STGDILRDHVARGTALGQRVKPILDAGQLV). AMP contacts are provided by residues threonine 37, arginine 42, 63 to 65 (QLV), 90 to 93 (GFPR), and glutamine 97. The tract at residues 131–147 (ERGRQAALRGEPVRSDD) is LID. ATP is bound at residue arginine 132. AMP contacts are provided by arginine 144 and arginine 155. ATP is bound at residue glycine 183.

Belongs to the adenylate kinase family. As to quaternary structure, monomer.

It localises to the cytoplasm. It carries out the reaction AMP + ATP = 2 ADP. It participates in purine metabolism; AMP biosynthesis via salvage pathway; AMP from ADP: step 1/1. Functionally, catalyzes the reversible transfer of the terminal phosphate group between ATP and AMP. Plays an important role in cellular energy homeostasis and in adenine nucleotide metabolism. The sequence is that of Adenylate kinase from Deinococcus geothermalis (strain DSM 11300 / CIP 105573 / AG-3a).